The chain runs to 605 residues: DNA primase (605 aa).

Residues C38 to C62 form a CHC2-type zinc finger. The Toprim domain maps to D260–G341. E266, D310, and D312 together coordinate Mg(2+).

It belongs to the DnaG primase family. In terms of assembly, monomer. Interacts with DnaB. It depends on Zn(2+) as a cofactor. Mg(2+) is required as a cofactor.

It catalyses the reaction ssDNA + n NTP = ssDNA/pppN(pN)n-1 hybrid + (n-1) diphosphate.. Its function is as follows. RNA polymerase that catalyzes the synthesis of short RNA molecules used as primers for DNA polymerase during DNA replication. The chain is DNA primase from Staphylococcus aureus (strain Mu50 / ATCC 700699).